Consider the following 331-residue polypeptide: Probable protein phosphatase 2C 72 (331 aa).

The 282-residue stretch at L43 to L324 folds into the PPM-type phosphatase domain. Mn(2+)-binding residues include D78, G79, D268, and D315.

This sequence belongs to the PP2C family. It depends on Mg(2+) as a cofactor. Mn(2+) is required as a cofactor.

It catalyses the reaction O-phospho-L-seryl-[protein] + H2O = L-seryl-[protein] + phosphate. The enzyme catalyses O-phospho-L-threonyl-[protein] + H2O = L-threonyl-[protein] + phosphate. The sequence is that of Probable protein phosphatase 2C 72 from Arabidopsis thaliana (Mouse-ear cress).